An 847-amino-acid chain; its full sequence is Guanine nucleotide exchange factor VAV3 (847 aa).

In terms of domain architecture, Calponin-homology (CH) spans 1 to 119 (MEPWKQCAQW…ETLSRLSRTP (119 aa)). Tyr141 bears the Phosphotyrosine mark. The region spanning 192–371 (IRSCCLAEIK…KDLAQYVNEV (180 aa)) is the DH domain. One can recognise a PH domain in the interval 400 to 502 (RPQGDGEIRI…WLEQFEMALS (103 aa)). Residues 513 to 562 (FHDFKMHTFTRVTSCKVCQMLLRGTFYQGYLCFKCGARAHKECLGRVDNC) form a Phorbol-ester/DAG-type zinc finger. A sufficient for interaction with ROS1 region spans residues 560–847 (DNCGRVNSGE…FPSTYVEEDE (288 aa)). Positions 592-660 (PGLPKMQVIR…PSDAVKPCPC (69 aa)) constitute an SH3 1 domain. The SH2 domain occupies 672–766 (WYAGAMERLQ…TLDTTLQFPY (95 aa)). The SH3 2 domain occupies 788–847 (KVLGIAIARYDFCARDMRELSLLKGDVVKIYTKMSANGWWRGEVNGRVGWFPSTYVEEDE).

In terms of assembly, interacts with the PH domain of SH2B2. Interacts (via SH2 domains) with the phosphorylated form of EPHA2. Interacts with ROS1; constitutive interaction that mediates VAV3 phosphorylation. Post-translationally, phosphorylated. Phosphorylation can be mediated by ROS1. In osteoclasts, undergoes tyrosine phosphorylation in response to CSF1. Isoform 1 and isoform 3 are widely expressed; both are expressed at very low levels in skeletal muscle. In keratinocytes, isoform 1 is less abundant than isoform 3. Isoform 3 is detected at very low levels, if any, in adrenal gland, bone marrow, spleen, fetal brain and spinal cord; in these tissues, isoform 1 is readily detectable.

In terms of biological role, exchange factor for GTP-binding proteins RhoA, RhoG and, to a lesser extent, Rac1. Binds physically to the nucleotide-free states of those GTPases. Plays an important role in angiogenesis. Its recruitment by phosphorylated EPHA2 is critical for EFNA1-induced RAC1 GTPase activation and vascular endothelial cell migration and assembly. May be important for integrin-mediated signaling, at least in some cell types. In osteoclasts, along with SYK tyrosine kinase, required for signaling through integrin alpha-v/beta-1 (ITAGV-ITGB1), a crucial event for osteoclast proper cytoskeleton organization and function. This signaling pathway involves RAC1, but not RHO, activation. Necessary for proper wound healing. In the course of wound healing, required for the phagocytotic cup formation preceding macrophage phagocytosis of apoptotic neutrophils. Responsible for integrin beta-2 (ITGB2)-mediated macrophage adhesion and, to a lesser extent, contributes to beta-3 (ITGB3)-mediated adhesion. Does not affect integrin beta-1 (ITGB1)-mediated adhesion. This is Guanine nucleotide exchange factor VAV3 (VAV3) from Homo sapiens (Human).